Consider the following 249-residue polypeptide: Serine 3-dehydrogenase (249 aa).

6–30 contributes to the NADP(+) binding site; sequence LITGATSGFGQATAQRFVKEGWKVI. Ser135 serves as a coordination point for substrate. The active-site Proton acceptor is Tyr148.

The protein belongs to the short-chain dehydrogenases/reductases (SDR) family. Homotetramer.

It carries out the reaction L-serine + NADP(+) = aminoacetaldehyde + CO2 + NADPH. In terms of biological role, catalyzes the oxidation of the hydroxyl group of serine to form 2-aminomalonate semialdehyde which is spontaneously converted into 2-aminoacetaldehyde and CO(2). Also acts on D-serine, L-glycerate, D-glycerate and 2-methyl-DL-serine. Does not act on O-methyl-DL-serine and L-threonine. The chain is Serine 3-dehydrogenase (sdh) from Rhizobium radiobacter (Agrobacterium tumefaciens).